Reading from the N-terminus, the 117-residue chain is UPF0321 protein PJ695.01c (117 aa).

The N-terminal stretch at 1–17 is a signal peptide; that stretch reads MLLLLYICCLFLKFILA. N-linked (GlcNAc...) asparagine glycans are attached at residues asparagine 39, asparagine 65, asparagine 71, and asparagine 104.

This sequence belongs to the UPF0321 family.

The polypeptide is UPF0321 protein PJ695.01c (Schizosaccharomyces pombe (strain 972 / ATCC 24843) (Fission yeast)).